Consider the following 516-residue polypeptide: MSSWITGLADKAENILNKLDQNAATALQTENATGSADPMRRSMTSSTQSLSTSLKSTLSPVRRSGANSSSSVKSDGGVSVVTKDMRQKMTTSASFSNSPDISANSMDTNELAAFKIALNEITAERDELRLRLEDLNNETEKFDLHQHTQVLEALVKSLSEERDKAVHDYNEAQAANMAYVHSISELETNLAKLQQEYISAAHKLQMQTKETEQQRQELQEYRIKAQRALQAKDSLIAELKAKPTEEGADPNLVSKDSETRFLQIEHESLKQELEHANEELQKARLQLDDYVSQERQRQVELSSARQREETLAKELRQAREHSVTSESDQRVLTQELASLRQQLSNQMAAAATRLQEREQQLQQMRQRLSEEANTGAKSDYETRLKALTQSLVERQSLLERVTSERNALRLQHEKAQTQLQQNMHLVEMESQRGSSRHTMLNSTDDVKAQFPLLMHPSPFDNRVARRFKRALRQADSMGIRVGTFLRRYPMMRVSVIVYVALLHLWVMFVLLSTTPN.

Topologically, residues 1-492 (MSSWITGLAD…TFLRRYPMMR (492 aa)) are cytoplasmic. Residues 28–80 (QTENATGSADPMRRSMTSSTQSLSTSLKSTLSPVRRSGANSSSSVKSDGGVSV) form a disordered region. Positions 42 to 80 (SMTSSTQSLSTSLKSTLSPVRRSGANSSSSVKSDGGVSV) are enriched in low complexity. Ser-64 and Ser-74 each carry phosphoserine. A coiled-coil region spans residues 108–423 (TNELAAFKIA…KAQTQLQQNM (316 aa)). Residues 493 to 513 (VSVIVYVALLHLWVMFVLLST) form a helical; Anchor for type IV membrane protein membrane-spanning segment. Residues 514–516 (TPN) are Lumenal-facing.

It is found in the golgi apparatus membrane. Functionally, may be involved in maintaining Golgi structure and in intra-Golgi transport. This Drosophila melanogaster (Fruit fly) protein is Golgin-84 (Golgin84).